The primary structure comprises 439 residues: Deacetylvindoline O-acetyltransferase (439 aa).

Residue His-158 is the Proton acceptor of the active site. The stretch at Thr-317–Gln-344 forms a coiled coil. The active-site Proton acceptor is the Asp-380.

Belongs to the plant acyltransferase family. As to quaternary structure, monomer. In terms of tissue distribution, predominantly expressed in young leaves of mature plants. Low expression in stems and flowers and not detected in roots. Confined to the laticifer and idioblast cells of leaves, stems, and flower buds.

Its subcellular location is the cytoplasm. It is found in the nucleus. The enzyme catalyses 4-O-deacetylvindoline + acetyl-CoA = vindoline + CoA. Its pathway is alkaloid biosynthesis; vindoline biosynthesis. Involved in the biosynthesis of vindoline, a precursor of vinblastine and vincristine. In Catharanthus roseus (Madagascar periwinkle), this protein is Deacetylvindoline O-acetyltransferase.